The chain runs to 883 residues: MPSLNDIRSTFLDYFRRNGHRVVESSPLVPRNDPTLMFTNSGMVQFKNCFTGLEHRDYTRATTAQKCVRAGGKHNDLDNVGYTARHHTFFEMLGNFSFGDYFKSEAIPFAWELLTRDFDIPREKLLVTVYHTDDEAASIWKKVAGLPDDRIIRIPTNDNFWMMGPTGPCGPCTEIFYDHGPSIWGGPPGSADEDGDRFIEIWNLVFMQNEQHPDGSMTPLPKQSIDTGMGLERIGALLQGKHDNYDTDLMRSLIEASAHATSTDPDGTGKTHHRVIADHLRSTSFLIADGVMPSNEGRGYVLRRIMRRAMRHAHLLGAQDPVMHRLVPALVRQMGAAYPELTRGQALIEETLKLEETRFRQTLDRGLRLLEDELDRLPEGSPLPGEAAFKLYDTYGFPLDLTQDALREKGRKVDVEGFEAAMAEQKAKARASWSGSGETKDAAIWFDLAERHGATEFLGYDTEKAEGQILAIVAGGVDTASATPGQTVQIILNQTPFYAESGGQVGDTGELRTDTGRARITDVRKGQGLFLHFAEVTEGEIRPGQGAALEVDHARRSAIRANHSATHLLHEALRRALGDHVAQRGSLNAPDRLRFDFSHSKALSAEELATVEAEVNQFIRSNGMVETRIMSPDDARALGAQALFGEKYGDEVRVVSMGTLAGSGKGMDGQTYSLELCGGTHVARLGDIGLCVILGDSASSAGVRRIEALTGEGALAHLNEQMQRLAEVAATLKASPAEMVDRVKALVEERRQLQNEVAQLRREAAMGGGAAAEAKDIGGVKFLAQIVQGVPGKDMPGLIDEMKARVGSGAVLLISDTAGKAALAAGVTPDLTDRLSAVALVKAAAEALGGRGGGGRPDMAQAGAADASQAEAAIRAVEAVIGG.

The Zn(2+) site is built by histidine 563, histidine 567, cysteine 677, and histidine 681.

This sequence belongs to the class-II aminoacyl-tRNA synthetase family. Requires Zn(2+) as cofactor.

It is found in the cytoplasm. The enzyme catalyses tRNA(Ala) + L-alanine + ATP = L-alanyl-tRNA(Ala) + AMP + diphosphate. Functionally, catalyzes the attachment of alanine to tRNA(Ala) in a two-step reaction: alanine is first activated by ATP to form Ala-AMP and then transferred to the acceptor end of tRNA(Ala). Also edits incorrectly charged Ser-tRNA(Ala) and Gly-tRNA(Ala) via its editing domain. This Cereibacter sphaeroides (strain ATCC 17025 / ATH 2.4.3) (Rhodobacter sphaeroides) protein is Alanine--tRNA ligase.